Consider the following 283-residue polypeptide: MNAWNTIYERFNPIAFSLGGIEVHWYGLAYACAIVVAFYMALRMIQKDPKRFPIERKEFESYFLWAELGIVLGARIGYVLIYEPNSSYYLTHFWQIFNPFDSHGNFIGIRGMSYHGGLVGFLIASYLYSRKDLKKLLIYLDLIAISLPLGYVFGRIGNFLNQELFGRIVPKDSHLGQIIGIMVDNELRYPSQLIEAFLEGVVVFLMVMWAKKHTKTHGLLIVVYGLGYSLMRFIAEFYREPDSQLGVYFLNLSMGQILSVFMVIVSLGILLYATKNSKKIKEE.

A run of 7 helical transmembrane segments spans residues 18–38 (LGGI…VVAF), 62–82 (YFLW…VLIY), 106–126 (FIGI…IASY), 136–156 (LLIY…FGRI), 190–210 (PSQL…VMWA), 218–238 (GLLI…AEFY), and 252–272 (LSMG…ILLY). R155 serves as a coordination point for a 1,2-diacyl-sn-glycero-3-phospho-(1'-sn-glycerol).

The protein belongs to the Lgt family.

It is found in the cell inner membrane. It catalyses the reaction L-cysteinyl-[prolipoprotein] + a 1,2-diacyl-sn-glycero-3-phospho-(1'-sn-glycerol) = an S-1,2-diacyl-sn-glyceryl-L-cysteinyl-[prolipoprotein] + sn-glycerol 1-phosphate + H(+). The protein operates within protein modification; lipoprotein biosynthesis (diacylglyceryl transfer). Its function is as follows. Catalyzes the transfer of the diacylglyceryl group from phosphatidylglycerol to the sulfhydryl group of the N-terminal cysteine of a prolipoprotein, the first step in the formation of mature lipoproteins. The protein is Phosphatidylglycerol--prolipoprotein diacylglyceryl transferase of Helicobacter pylori (strain J99 / ATCC 700824) (Campylobacter pylori J99).